The chain runs to 517 residues: Lysophosphatidylcholine acyltransferase 1 (517 aa).

At 1–52 (MRFPNRKLHTAVNGGDSGVSTHFRNPFVHELRFTTLQKLKIAVMTVTLFPVR) the chain is on the cytoplasmic side. Residues 53-73 (LLFAAFMMLLAWPFAFVATVG) traverse the membrane as a helical; Signal-anchor for type II membrane protein segment. The Lumenal portion of the chain corresponds to 74–517 (RSENAVEPLS…SPRNHSKKQD (444 aa)). The HXXXXD motif signature appears at 129-134 (HSSYFD). The N-linked (GlcNAc...) asparagine glycan is linked to Asn207. The 36-residue stretch at 443–478 (VGDLAVSELFRAIDSQDKGKITFDELCSFMEKCPDL) folds into the EF-hand domain. Residue Asn511 is glycosylated (N-linked (GlcNAc...) asparagine). Positions 514-517 (KKQD) match the Di-lysine motif motif.

Belongs to the 1-acyl-sn-glycerol-3-phosphate acyltransferase family.

The protein localises to the endoplasmic reticulum membrane. It is found in the golgi apparatus membrane. The protein resides in the cell membrane. It localises to the lipid droplet. The catalysed reaction is a 1-acyl-sn-glycero-3-phosphocholine + an acyl-CoA = a 1,2-diacyl-sn-glycero-3-phosphocholine + CoA. The enzyme catalyses a 1-O-alkyl-sn-glycero-3-phosphocholine + acetyl-CoA = a 1-O-alkyl-2-acetyl-sn-glycero-3-phosphocholine + CoA. It catalyses the reaction a 1-acyl-sn-glycero-3-phosphate + an acyl-CoA = a 1,2-diacyl-sn-glycero-3-phosphate + CoA. It carries out the reaction a 1-O-(1Z-alkenyl)-sn-glycero-3-phosphocholine + an acyl-CoA = a 1-O-(1Z-alkenyl)-2-acyl-sn-glycero-3-phosphocholine + CoA. The catalysed reaction is 1-acyl-sn-glycero-3-phospho-(1'-sn-glycerol) + an acyl-CoA = a 1,2-diacyl-sn-glycero-3-phospho-(1'-sn-glycerol) + CoA. The enzyme catalyses 1-hexadecanoyl-sn-glycero-3-phosphocholine + hexadecanoyl-CoA = 1,2-dihexadecanoyl-sn-glycero-3-phosphocholine + CoA. It catalyses the reaction 1-O-hexadecyl-sn-glycero-3-phosphocholine + hexadecanoyl-CoA = 1-O-hexadecyl-2-hexadecanoyl-sn-glycero-3-phosphocholine + CoA. It carries out the reaction a 1-O-(1Z-alkenyl)-sn-glycero-3-phosphocholine + hexadecanoyl-CoA = 1-O-(1Z)-alkenyl-2-hexadecanoyl-sn-glycero-3-phosphocholine + CoA. The catalysed reaction is 1-hexadecanoyl-sn-glycero-3-phospho-(1'-sn-glycerol) + hexadecanoyl-CoA = 1,2-dihexadecanoyl-sn-glycero-3-phospho-(1'-sn-glycerol) + CoA. The enzyme catalyses 1-dodecanoyl-sn-glycero-3-phosphocholine + hexadecanoyl-CoA = 1-dodecanoyl-2-hexadecanoyl-sn-glycero-3-phosphocholine + CoA. It catalyses the reaction 1-tetradecanoyl-sn-glycero-3-phosphocholine + hexadecanoyl-CoA = 1-tetradecanoyl-2-hexadecanoyl-sn-glycero-3-phosphocholine + CoA. It carries out the reaction 1-O-octadecyl-sn-glycero-3-phosphocholine + hexadecanoyl-CoA = 1-O-octadecyl-2-hexadecanoyl-sn-glycero-3-phosphocholine + CoA. The catalysed reaction is 1-octadecanoyl-sn-glycero-3-phosphocholine + hexadecanoyl-CoA = 1-octadecanoyl-2-hexadecanoyl-sn-glycero-3-phosphocholine + CoA. The enzyme catalyses 1-(9Z-octadecenoyl)-sn-glycero-3-phosphocholine + hexadecanoyl-CoA = 1-(9Z-octadecenoyl)-2-hexadecanoyl-sn-glycero-3-phosphocholine + CoA. It catalyses the reaction 1-eicosanoyl-sn-glycero-3-phosphocholine + hexadecanoyl-CoA = 1-eicosanoyl-2-hexadecanoyl-sn-glycero-3-phosphocholine + CoA. It carries out the reaction hexanoyl-CoA + 1-hexadecanoyl-sn-glycero-3-phosphocholine = 1-hexadecanoyl-2-hexanoyl-sn-glycero-3-phosphocholine + CoA. The catalysed reaction is octanoyl-CoA + 1-hexadecanoyl-sn-glycero-3-phosphocholine = 1-hexadecanoyl-2-octanoyl-sn-glycero-3-phosphocholine + CoA. The enzyme catalyses decanoyl-CoA + 1-hexadecanoyl-sn-glycero-3-phosphocholine = 1-hexadecanoyl-2-decanoyl-sn-glycero-3-phosphocholine + CoA. It catalyses the reaction dodecanoyl-CoA + 1-hexadecanoyl-sn-glycero-3-phosphocholine = 1-hexadecanoyl-2-dodecanoyl-sn-glycero-3-phosphocholine + CoA. It carries out the reaction tetradecanoyl-CoA + 1-hexadecanoyl-sn-glycero-3-phosphocholine = 1-hexadecanoyl-2-tetradecanoyl-sn-glycero-3-phosphocholine + CoA. The catalysed reaction is 1-hexadecanoyl-sn-glycero-3-phosphocholine + (9Z)-octadecenoyl-CoA = 1-hexadecanoyl-2-(9Z-octadecenoyl)-sn-glycero-3-phosphocholine + CoA. The enzyme catalyses (9Z,12Z)-octadecadienoyl-CoA + 1-hexadecanoyl-sn-glycero-3-phosphocholine = 1-hexadecanoyl-2-(9Z,12Z-octadecadienoyl)-sn-glycero-3-phosphocholine + CoA. It catalyses the reaction (4Z,7Z,10Z,13Z,16Z,19Z)-docosahexaenoyl-CoA + 1-hexadecanoyl-sn-glycero-3-phosphocholine = 1-hexadecanoyl-2-(4Z,7Z,10Z,13Z,16Z,19Z-docosahexaenoyl)-sn-glycero-3-phosphocholine + CoA. It carries out the reaction 1-hexadecanoyl-sn-glycero-3-phosphocholine + acetyl-CoA = 1-hexadecanoyl-2-acetyl-sn-glycero-3-phosphocholine + CoA. The catalysed reaction is eicosanoyl-CoA + 1-hexadecanoyl-sn-glycero-3-phosphocholine = 1-hexadecanoyl-2-eicosanoyl-sn-glycero-3-phosphocholine + CoA. The enzyme catalyses 1-O-hexadecyl-sn-glycero-3-phosphocholine + acetyl-CoA = 1-O-hexadecyl-2-acetyl-sn-glycero-3-phosphocholine + CoA. It catalyses the reaction a 1-acyl-sn-glycero-3-phosphocholine + hexadecanoyl-CoA = 1-acyl-2-hexadecanoyl-sn-glycero-3-phosphocholine + CoA. It carries out the reaction a 1-acyl-sn-glycero-3-phosphate + hexadecanoyl-CoA = 1-acyl-2-hexadecanoyl-sn-glycero-3-phosphate + CoA. The catalysed reaction is 1-acyl-sn-glycero-3-phospho-(1'-sn-glycerol) + hexadecanoyl-CoA = 1-acyl-2-hexadecanoyl-sn-glycero-3-phospho-(1'-sn-glycerol) + CoA. The protein operates within lipid metabolism; phospholipid metabolism. In terms of biological role, exhibits both acyltransferase and acetyltransferase activities. Activity is calcium-independent. Catalyzes the conversion of lysophosphatidylcholine (1-acyl-sn-glycero-3-phosphocholine or LPC) into phosphatidylcholine (1,2-diacyl-sn-glycero-3-phosphocholine or PC). Catalyzes the conversion 1-acyl-sn-glycerol-3-phosphate (lysophosphatidic acid or LPA) into 1,2-diacyl-sn-glycerol-3-phosphate (phosphatidic acid or PA) by incorporating an acyl moiety at the sn-2 position of the glycerol backbone. The polypeptide is Lysophosphatidylcholine acyltransferase 1 (lpcat1) (Danio rerio (Zebrafish)).